We begin with the raw amino-acid sequence, 597 residues long: Putative diflavin flavoprotein A 3 (597 aa).

Residues 59–254 are zinc metallo-hydrolase; it reads QRGTTANSYL…YPAQTYAPSH (196 aa). A Flavodoxin-like domain is found at 283 to 421; it reads VALIYASAYG…MCEEAGTDFA (139 aa). Residues 449 to 597 form a flavodoxin-reductase-like region; it reads LGRLVGSLCV…VHHRKSGDHY (149 aa).

The protein in the N-terminal section; belongs to the zinc metallo-hydrolase group 3 family. It in the C-terminal section; belongs to the flavodoxin reductase family. Requires Fe cation as cofactor.

Mediates electron transfer from NADH to oxygen, reducing it to water. This modular protein has 3 redox cofactors, in other organisms the same activity requires 2 or 3 proteins. The polypeptide is Putative diflavin flavoprotein A 3 (dfa3) (Synechocystis sp. (strain ATCC 27184 / PCC 6803 / Kazusa)).